The primary structure comprises 406 residues: Phosphatidylinositol 5-phosphate 4-kinase type-2 alpha (406 aa).

Ala-2 is modified (N-acetylalanine). Thr-3 carries the phosphothreonine modification. Phosphoserine is present on Ser-14. A PIPK domain is found at 33-405 (ASDPLLSVLM…RFLDFIGHIL (373 aa)). Residues 59–65 (VMLMPDD) are required for interaction with PIP5K1A. N6-acetyllysine is present on residues Lys-89 and Lys-145. The segment at 288–329 (QEEVECEENDGEEEGESDGTHPVGTPPDSPGNTLNSSPPLAP) is disordered. Residues 289–304 (EEVECEENDGEEEGES) show a composition bias toward acidic residues.

In terms of assembly, homodimer. Interacts with PIP4K2B; the interaction may regulate localization to the nucleus. Probably interacts with PIP5K1A; the interaction inhibits PIP5K1A kinase activity. Post-translationally, phosphorylated in tyrosines. Phosphorylation is induced by light and increases kinase activity. In terms of tissue distribution, expressed ubiquitously, with high levels in the brain. Present in most tissues, except notably skeletal muscle and small intestine.

It is found in the cell membrane. The protein resides in the nucleus. It localises to the lysosome. Its subcellular location is the cytoplasm. The protein localises to the photoreceptor inner segment. It is found in the cell projection. The protein resides in the cilium. It localises to the photoreceptor outer segment. The catalysed reaction is a 1,2-diacyl-sn-glycero-3-phospho-(1D-myo-inositol-5-phosphate) + ATP = a 1,2-diacyl-sn-glycero-3-phospho-(1D-myo-inositol-4,5-bisphosphate) + ADP + H(+). The enzyme catalyses 1,2-dihexadecanoyl-sn-glycero-3-phospho-(1D-myo-inositol-5-phosphate) + ATP = 1,2-dihexadecanoyl-sn-glycero-3-phospho-(1D-myo-inositol-4,5-bisphosphate) + ADP + H(+). It carries out the reaction 1,2-dihexadecanoyl-sn-glycero-3-phospho-(1D-myo-inositol-5-phosphate) + GTP = 1,2-dihexadecanoyl-sn-glycero-3-phospho-(1D-myo-inositol-4,5-bisphosphate) + GDP + H(+). With respect to regulation, in rod outer segments, activated by light. Inhibited by I-OMe tyrphostin AG-538 (I-OMe-AG-538), acting as an ATP-competitive inhibitor. In terms of biological role, catalyzes the phosphorylation of phosphatidylinositol 5-phosphate (PtdIns5P) on the fourth hydroxyl of the myo-inositol ring, to form phosphatidylinositol 4,5-bisphosphate (PtdIns(4,5)P2). Has both ATP- and GTP-dependent kinase activities. May exert its function by regulating the levels of PtdIns5P, which functions in the cytosol by increasing AKT activity and in the nucleus signals through ING2. May regulate the pool of cytosolic PtdIns5P in response to the activation of tyrosine phosphorylation. Required for lysosome-peroxisome membrane contacts and intracellular cholesterol transport through modulating peroxisomal PtdIns(4,5)P2 level. In collaboration with PIP4K2B, has a role in mediating autophagy in times of nutrient stress. Required for autophagosome-lysosome fusion and the regulation of cellular lipid metabolism. May be involved in thrombopoiesis, and the terminal maturation of megakaryocytes and regulation of their size. Negatively regulates insulin signaling through a catalytic-independent mechanism. PIP4Ks interact with PIP5Ks and suppress PIP5K-mediated PtdIns(4,5)P2 synthesis and insulin-dependent conversion to PtdIns(3,4,5)P3. This Homo sapiens (Human) protein is Phosphatidylinositol 5-phosphate 4-kinase type-2 alpha.